We begin with the raw amino-acid sequence, 1165 residues long: Protein hsr-9 (1165 aa).

Disordered regions lie at residues 1–26 (MASSSNTMEFEEDDSTVTQTSLPTTT), 70–578 (AEDE…TEME), 608–713 (KYSM…IPLK), and 874–913 (TRARKPTTVSNQAKPKGRKKKGVDLVSSRGGSASPAEEEE). The segment covering 16 to 26 (TVTQTSLPTTT) has biased composition (low complexity). 3 stretches are compositionally biased toward basic and acidic residues: residues 98–114 (KDAKSGESMNDSEKSES), 123–140 (TFEKKIISMDTSDDKLDI), and 149–162 (DTEKPEENEEKVVG). 3 stretches are compositionally biased toward acidic residues: residues 163 to 179 (DEDEEDIDDVQEDDEDE), 211 to 230 (EKEEPENEDDTEEPENEVEV), and 280 to 289 (GESEANEENQ). Over residues 306–317 (ATVSSTPSSNTP) the composition is skewed to polar residues. Positions 397–408 (NTEHPTEEETPK) are enriched in basic and acidic residues. Low complexity predominate over residues 415-431 (SAASSSATSSAVPTPRS). A compositionally biased stretch (basic and acidic residues) spans 446-461 (LQEKETEDPTKTHDTN). The segment covering 533 to 543 (DPIEEADETIE) has biased composition (acidic residues). Low complexity predominate over residues 554-563 (AAKSAPSSSK). Basic and acidic residues-rich tracts occupy residues 662 to 671 (KKEEEHHEND) and 694 to 708 (SEASDIKTPPAKKEP). In terms of domain architecture, BRCT spans 923–1028 (IGKNIFTGKV…KCVDYTDYVL (106 aa)).

Expressed in germ cells.

The protein resides in the nucleus. Its function is as follows. May have a role in DNA double-strand break repair following gamma-irradiation. In Caenorhabditis elegans, this protein is Protein hsr-9.